Here is a 497-residue protein sequence, read N- to C-terminus: Aspartyl/glutamyl-tRNA(Asn/Gln) amidotransferase subunit B (497 aa).

This sequence belongs to the GatB/GatE family. GatB subfamily. As to quaternary structure, heterotrimer of A, B and C subunits.

It catalyses the reaction L-glutamyl-tRNA(Gln) + L-glutamine + ATP + H2O = L-glutaminyl-tRNA(Gln) + L-glutamate + ADP + phosphate + H(+). The catalysed reaction is L-aspartyl-tRNA(Asn) + L-glutamine + ATP + H2O = L-asparaginyl-tRNA(Asn) + L-glutamate + ADP + phosphate + 2 H(+). Allows the formation of correctly charged Asn-tRNA(Asn) or Gln-tRNA(Gln) through the transamidation of misacylated Asp-tRNA(Asn) or Glu-tRNA(Gln) in organisms which lack either or both of asparaginyl-tRNA or glutaminyl-tRNA synthetases. The reaction takes place in the presence of glutamine and ATP through an activated phospho-Asp-tRNA(Asn) or phospho-Glu-tRNA(Gln). This is Aspartyl/glutamyl-tRNA(Asn/Gln) amidotransferase subunit B from Cutibacterium acnes (strain DSM 16379 / KPA171202) (Propionibacterium acnes).